The chain runs to 116 residues: Fluoride-specific ion channel FluC 1 (116 aa).

Helical transmembrane passes span 1–21 (MYAPLFVAIGGFFGAMARYLV), 32–52 (FPLGTLIVNLLGSFLLGWLAG), 54–74 (GAADAAKLLVGTGFMGAFTTF), and 93–113 (VVVYLAATYLCGVWLAWLGYH). Na(+) is bound by residues Gly69 and Thr72.

The protein belongs to the fluoride channel Fluc/FEX (TC 1.A.43) family.

Its subcellular location is the cell membrane. The catalysed reaction is fluoride(in) = fluoride(out). Na(+) is not transported, but it plays an essential structural role and its presence is essential for fluoride channel function. Its function is as follows. Fluoride-specific ion channel. Important for reducing fluoride concentration in the cell, thus reducing its toxicity. The protein is Fluoride-specific ion channel FluC 1 of Geobacillus kaustophilus (strain HTA426).